Reading from the N-terminus, the 187-residue chain is MTDILTNMFTIVAELPLGEEEGFAFNGNILETNLINLAAVIGLLFYSGRSFLTNLLRNREDNILKSIRDADERYKEATEKLQQAKNEFEQAKIEADEIRAQSRITAKEIEVSLMGLVSEDTKRLIDMKQATISFEEEKAINEVRRQVIRLALQRALEQSKNRLNHRLQKRVTRLNIGLLGQLVGVND.

Residues Leu34–Leu56 traverse the membrane as a helical segment.

It belongs to the ATPase B chain family. As to quaternary structure, F-type ATPases have 2 components, F(1) - the catalytic core - and F(0) - the membrane proton channel. F(1) has five subunits: alpha(3), beta(3), gamma(1), delta(1), epsilon(1). F(0) has four main subunits: a(1), b(1), b'(1) and c(10-14). The alpha and beta chains form an alternating ring which encloses part of the gamma chain. F(1) is attached to F(0) by a central stalk formed by the gamma and epsilon chains, while a peripheral stalk is formed by the delta, b and b' chains.

It localises to the plastid. The protein resides in the chloroplast thylakoid membrane. Its function is as follows. F(1)F(0) ATP synthase produces ATP from ADP in the presence of a proton or sodium gradient. F-type ATPases consist of two structural domains, F(1) containing the extramembraneous catalytic core and F(0) containing the membrane proton channel, linked together by a central stalk and a peripheral stalk. During catalysis, ATP synthesis in the catalytic domain of F(1) is coupled via a rotary mechanism of the central stalk subunits to proton translocation. Functionally, component of the F(0) channel, it forms part of the peripheral stalk, linking F(1) to F(0). This is ATP synthase subunit b, chloroplastic from Chlorokybus atmophyticus (Soil alga).